The chain runs to 711 residues: Polyribonucleotide nucleotidyltransferase (711 aa).

Mg(2+)-binding residues include D486 and D492. In terms of domain architecture, KH spans 553–612; sequence PRIHTIKINPDKIKDVIGKGGSVIRALTEETGTTIEIEDDGTVKIAATDGDKAQHAIRRI. One can recognise an S1 motif domain in the interval 622 to 690; the sequence is GRIYNGKVTR…RQGRVRLSIK (69 aa). Positions 691 to 711 are disordered; it reads EATEQTPSAAAPEAPVAEQGE. The segment covering 699–711 has biased composition (low complexity); it reads AAAPEAPVAEQGE.

Belongs to the polyribonucleotide nucleotidyltransferase family. Component of the RNA degradosome, which is a multiprotein complex involved in RNA processing and mRNA degradation. Mg(2+) serves as cofactor.

The protein localises to the cytoplasm. It carries out the reaction RNA(n+1) + phosphate = RNA(n) + a ribonucleoside 5'-diphosphate. Involved in mRNA degradation. Catalyzes the phosphorolysis of single-stranded polyribonucleotides processively in the 3'- to 5'-direction. The chain is Polyribonucleotide nucleotidyltransferase from Klebsiella pneumoniae (strain 342).